Consider the following 121-residue polypeptide: Transposase InsC for insertion element IS2A (121 aa).

This sequence belongs to the transposase 8 family.

Its function is as follows. Involved in the transposition of the insertion sequence IS2. The protein is Transposase InsC for insertion element IS2A (insC1) of Escherichia coli (strain K12).